A 116-amino-acid chain; its full sequence is Phosphoribosyl-ATP pyrophosphatase (116 aa).

The protein belongs to the PRA-PH family.

The protein resides in the cytoplasm. The catalysed reaction is 1-(5-phospho-beta-D-ribosyl)-ATP + H2O = 1-(5-phospho-beta-D-ribosyl)-5'-AMP + diphosphate + H(+). It participates in amino-acid biosynthesis; L-histidine biosynthesis; L-histidine from 5-phospho-alpha-D-ribose 1-diphosphate: step 2/9. This is Phosphoribosyl-ATP pyrophosphatase from Nitrobacter winogradskyi (strain ATCC 25391 / DSM 10237 / CIP 104748 / NCIMB 11846 / Nb-255).